A 996-amino-acid polypeptide reads, in one-letter code: GPI ethanolamine phosphate transferase 1 (996 aa).

The Cytoplasmic portion of the chain corresponds to 1 to 8 (MAAFPRFR). The helical transmembrane segment at 9–29 (FLAIAVIFHFAYIFSIFDIYF) threads the bilayer. Residues 30–463 (VSPIETGMRL…LQTYDWLFLR (434 aa)) lie on the Lumenal side of the membrane. Residues Asn47, Asn147, and Asn210 are each glycosylated (N-linked (GlcNAc...) asparagine). A helical transmembrane segment spans residues 464-484 (ALITIGYLGWIAYALTTVVDL). Residues 485–495 (HVLHGRVRPSR) are Cytoplasmic-facing. The helical transmembrane segment at 496-516 (TLGGGLFFTSVLVALYASLVI) threads the bilayer. Topologically, residues 517 to 518 (SK) are lumenal. The helical transmembrane segment at 519–539 (SPLTYYVYAFFPVFFWEEVYA) threads the bilayer. Over 540–560 (HRESLAAGRKELLGHINSGGS) the chain is Cytoplasmic. The helical transmembrane segment at 561-581 (VASFVLNSALYVGVIESLALG) threads the bilayer. Over 582–586 (YIHRE) the chain is Lumenal. Residues 587–607 (ILSVLFVLGSFWPFTHGLSFL) traverse the membrane as a helical segment. The Cytoplasmic portion of the chain corresponds to 608–612 (KKHGA). The chain crosses the membrane as a helical span at residues 613–633 (LSATWFLACIAMSTFTLLPAM). The Lumenal portion of the chain corresponds to 634-637 (KAEN). A helical transmembrane segment spans residues 638 to 658 (VNLITIGGVLMVVIGLLYLIF). Topologically, residues 659 to 681 (EDFVLADFSWNAKPTSRNHLSRS) are cytoplasmic. The helical transmembrane segment at 682 to 702 (LVGIQVGLTVLSIIITRSSAL) threads the bilayer. Over 703-715 (SLQAKQGLPRGNQ) the chain is Lumenal. Residues 716 to 734 (IMGWVTLVASLLMPLAYRL) form a helical membrane-spanning segment. Residues 735–754 (RPNNHYMHRILVIFLTCAPT) are Cytoplasmic-facing. The helical transmembrane segment at 755-775 (FVILTISYEGLFYLVFSALLV) threads the bilayer. The Lumenal portion of the chain corresponds to 776-822 (SWVRLEHAVQKFTSSKAPQTAATKKPTTTTESHLPAPFRPLTLHDAR). A helical transmembrane segment spans residues 823 to 843 (VALFFFILLQSAFFSTGNVAS). Over 844 to 865 (VSSFSLDSVYRLIPIFDPFSQG) the chain is Cytoplasmic. The helical transmembrane segment at 866 to 886 (AMLILKLMIPFALISANLGIL) threads the bilayer. Topologically, residues 887–895 (NKRLGVAPS) are lumenal. The chain crosses the membrane as a helical span at residues 896–916 (ALFMVVMGISDILTLYFFWVV). Residues 917–932 (KDEGSWLEIGSTISHF) lie on the Cytoplasmic side of the membrane. Residues 933–953 (VIASLLCVFVSALEPVSAAFI) form a helical membrane-spanning segment. Residues 954-996 (AGVEVGEESELKEEGKVAEKVVEKVNEAVEGLVSGGDGGGDES) are Lumenal-facing.

Belongs to the PIGG/PIGN/PIGO family. PIGN subfamily.

The protein resides in the endoplasmic reticulum membrane. The protein operates within glycolipid biosynthesis; glycosylphosphatidylinositol-anchor biosynthesis. In terms of biological role, ethanolamine phosphate transferase involved in glycosylphosphatidylinositol-anchor biosynthesis. Transfers ethanolamine phosphate to the first alpha-1,4-linked mannose of the glycosylphosphatidylinositol precursor of GPI-anchor. In Neurospora crassa (strain ATCC 24698 / 74-OR23-1A / CBS 708.71 / DSM 1257 / FGSC 987), this protein is GPI ethanolamine phosphate transferase 1 (mcd-4).